The chain runs to 522 residues: Tryptophan 2-halogenase (522 aa).

Ala-17, Glu-36, Arg-42, His-44, Ile-45, Ser-48, Arg-103, Ile-127, and Asp-296 together coordinate FAD. The chloride site is built by Ser-307 and Gly-308. Val-309 lines the FAD pocket.

It belongs to the flavin-dependent halogenase family.

In terms of biological role, involved in the incorporation of a chlorinated tryptophan residue into halogenated forms of the secondary metabolites called chondramides. This Chondromyces crocatus protein is Tryptophan 2-halogenase.